Reading from the N-terminus, the 86-residue chain is RNA-binding protein Hfq (86 aa).

One can recognise a Sm domain in the interval 12-73; it reads DIFLNQVRKE…ISTISPQKPV (62 aa).

The protein belongs to the Hfq family. In terms of assembly, homohexamer.

Functionally, RNA chaperone that binds small regulatory RNA (sRNAs) and mRNAs to facilitate mRNA translational regulation in response to envelope stress, environmental stress and changes in metabolite concentrations. Also binds with high specificity to tRNAs. The chain is RNA-binding protein Hfq from Caldanaerobacter subterraneus subsp. tengcongensis (strain DSM 15242 / JCM 11007 / NBRC 100824 / MB4) (Thermoanaerobacter tengcongensis).